The following is a 125-amino-acid chain: Holo-[acyl-carrier-protein] synthase (125 aa).

2 residues coordinate Mg(2+): Glu-9 and Gln-58.

This sequence belongs to the P-Pant transferase superfamily. AcpS family. Requires Mg(2+) as cofactor.

It localises to the cytoplasm. It carries out the reaction apo-[ACP] + CoA = holo-[ACP] + adenosine 3',5'-bisphosphate + H(+). Its function is as follows. Transfers the 4'-phosphopantetheine moiety from coenzyme A to a Ser of acyl-carrier-protein. The sequence is that of Holo-[acyl-carrier-protein] synthase from Rhodopirellula baltica (strain DSM 10527 / NCIMB 13988 / SH1).